A 102-amino-acid polypeptide reads, in one-letter code: NADH-quinone oxidoreductase subunit K (102 aa).

Helical transmembrane passes span 5–25 (LGHFLSLGAMLFALSVIGIFL), 31–51 (IVLLMAIELMLLAVNMNFVAF), and 62–82 (IFVFFILTVAAAESAIGLALL).

The protein belongs to the complex I subunit 4L family. NDH-1 is composed of 14 different subunits. Subunits NuoA, H, J, K, L, M, N constitute the membrane sector of the complex.

It is found in the cell inner membrane. The catalysed reaction is a quinone + NADH + 5 H(+)(in) = a quinol + NAD(+) + 4 H(+)(out). Functionally, NDH-1 shuttles electrons from NADH, via FMN and iron-sulfur (Fe-S) centers, to quinones in the respiratory chain. The immediate electron acceptor for the enzyme in this species is believed to be ubiquinone. Couples the redox reaction to proton translocation (for every two electrons transferred, four hydrogen ions are translocated across the cytoplasmic membrane), and thus conserves the redox energy in a proton gradient. In Variovorax paradoxus (strain S110), this protein is NADH-quinone oxidoreductase subunit K.